A 72-amino-acid polypeptide reads, in one-letter code: Small, acid-soluble spore protein C (72 aa).

It belongs to the alpha/beta-type SASP family.

In terms of biological role, SASP are bound to spore DNA. They are double-stranded DNA-binding proteins that cause DNA to change to an a-like conformation. They protect the DNA backbone from chemical and enzymatic cleavage and are thus involved in dormant spore's high resistance to UV light. The sequence is that of Small, acid-soluble spore protein C (sasP-C) from Priestia megaterium (Bacillus megaterium).